The sequence spans 203 residues: Small ribosomal subunit protein uS4c (203 aa).

Residues 92-150 enclose the S4 RNA-binding domain; that stretch reads MRLDNIIYRLGMAPTIANARQLVNHGHIVVNDRIVTIPSYRCKPKDIISVRNNSTSRNV.

The protein belongs to the universal ribosomal protein uS4 family. In terms of assembly, part of the 30S ribosomal subunit. Contacts protein S5. The interaction surface between S4 and S5 is involved in control of translational fidelity.

Its subcellular location is the plastid. The protein localises to the chloroplast. In terms of biological role, one of the primary rRNA binding proteins, it binds directly to 16S rRNA where it nucleates assembly of the body of the 30S subunit. Functionally, with S5 and S12 plays an important role in translational accuracy. The protein is Small ribosomal subunit protein uS4c (rps4) of Chlorokybus atmophyticus (Soil alga).